The primary structure comprises 502 residues: Lipoyl synthase, apicoplast (502 aa).

Residues 1–16 form the signal peptide; it reads MNFLVLFFSYSIFVLP. C192, C197, C203, C218, C222, C225, and S433 together coordinate [4Fe-4S] cluster. The 219-residue stretch at 204-422 folds into the Radical SAM core domain; sequence WNIGTATIML…KDVGLKMGFK (219 aa).

It belongs to the radical SAM superfamily. Lipoyl synthase family. [4Fe-4S] cluster is required as a cofactor.

The protein localises to the plastid. The protein resides in the apicoplast. It carries out the reaction [[Fe-S] cluster scaffold protein carrying a second [4Fe-4S](2+) cluster] + N(6)-octanoyl-L-lysyl-[protein] + 2 oxidized [2Fe-2S]-[ferredoxin] + 2 S-adenosyl-L-methionine + 4 H(+) = [[Fe-S] cluster scaffold protein] + N(6)-[(R)-dihydrolipoyl]-L-lysyl-[protein] + 4 Fe(3+) + 2 hydrogen sulfide + 2 5'-deoxyadenosine + 2 L-methionine + 2 reduced [2Fe-2S]-[ferredoxin]. It participates in protein modification; protein lipoylation via endogenous pathway; protein N(6)-(lipoyl)lysine from octanoyl-[acyl-carrier-protein]: step 2/2. Functionally, catalyzes the radical-mediated insertion of two sulfur atoms into the C-6 and C-8 positions of the octanoyl moiety bound to the lipoyl domains of lipoate-dependent enzymes, thereby converting the octanoylated domains into lipoylated derivatives. This chain is Lipoyl synthase, apicoplast, found in Plasmodium yoelii yoelii.